The primary structure comprises 390 residues: Aspartate beta-hydroxylase domain-containing protein 1 (390 aa).

Residues 1-54 (MKEGRGSFSVERGPRKERETAQSGMWKGNSPAGSQGAAMEGTGGELGGQGNWGP) are disordered. Over 1-72 (MKEGRGSFSV…RASLIMLPWP (72 aa)) the chain is Cytoplasmic. Residues 41-51 (GTGGELGGQGN) are compositionally biased toward gly residues. The chain crosses the membrane as a helical span at residues 73-95 (LPLASSALTLLFGALTSLFLWYC). Residues 96 to 390 (YRLGSQDMQA…ALDFVFAPDP (295 aa)) lie on the Lumenal side of the membrane. The tract at residues 116–143 (RGGPVGCSEAGGPSPGGPGDPGEGPRTE) is disordered. Residues 128 to 137 (PSPGGPGDPG) show a composition bias toward gly residues. Ser-129 bears the Phosphoserine mark.

It belongs to the aspartyl/asparaginyl beta-hydroxylase family.

It is found in the membrane. This is Aspartate beta-hydroxylase domain-containing protein 1 (ASPHD1) from Homo sapiens (Human).